Reading from the N-terminus, the 4835-residue chain is Midasin (4835 aa).

6 AAA-ATPase protomer regions span residues 12–161, 324–689, 797–1049, 1096–1375, 1489–1738, and 1821–2110; these read EVLR…PLVL, RSLD…HRFR, MTTI…AEII, KFQD…DYIT, APTT…FGYR, and ALEA…SIDI. Residues 31–38, 356–363, 814–821, 1127–1134, 1513–1520, and 1839–1846 contribute to the ATP site; these read GPSASGRT, GPTGIGKT, GTTSSGKT, GVSGAGKT, GDPGVGKS, and GSPESGKS. Residues 2197–4058 form a linker region; it reads SVFIASTLNA…DGTGDQNVSK (1862 aa). Disordered stretches follow at residues 4033 to 4056 and 4108 to 4523; these read DQKETDNDNQSGLGLGDGTGDQNV and IEEE…LLNP. 5 stretches are compositionally biased toward acidic residues: residues 4109-4133, 4141-4150, 4226-4241, 4282-4291, and 4315-4330; these read EEEDSNGSDEEEVLEKEMGDEQGEA, EDDDSAEEYS, ADGEDETVNEELEEEQ, VDIDDNEASD, and NDEEEMQKDTEYDQEN. The segment covering 4331–4346 has biased composition (polar residues); sequence ITDSNPDANEVGTNDQ. 3 stretches are compositionally biased toward basic and acidic residues: residues 4347–4360, 4394–4415, and 4429–4438; these read KQTHEDNDQFRQEN, EFQRIWKERLNIHDRESEKDEA, and VEFDDSKSGR. Over residues 4468–4477 the composition is skewed to polar residues; that stretch reads HNSSCETSQS. Positions 4478 to 4488 are enriched in basic and acidic residues; the sequence is SHDRPPAEHLN. The 190-residue stretch at 4629–4818 folds into the VWFA domain; that stretch reads QVLLAVDDSS…RHIEDLPETL (190 aa).

The protein belongs to the midasin family. Associates with pre-60S ribosomes in the nucleoplasm.

Its subcellular location is the nucleus. It is found in the nucleolus. The protein localises to the nucleoplasm. In terms of biological role, nuclear chaperone required for maturation and nuclear export of pre-60S ribosome subunits. Functions at successive maturation steps to remove ribosomal factors at critical transition points, first driving the exit of early pre-60S particles from the nucleolus and then driving late pre-60S particles from the nucleus. This chain is Midasin (MDN1), found in Giardia intestinalis (Giardia lamblia).